The following is an 86-amino-acid chain: Large ribosomal subunit protein eL43 (86 aa).

Residues Cys-38, Cys-41, Cys-56, and Cys-59 each coordinate Zn(2+). The C4-type zinc finger occupies 38-59; sequence CPVCGRKAVRRISTGIWQCQKC.

It belongs to the eukaryotic ribosomal protein eL43 family. In terms of assembly, part of the 50S ribosomal subunit. It depends on Zn(2+) as a cofactor.

The chain is Large ribosomal subunit protein eL43 from Thermococcus kodakarensis (strain ATCC BAA-918 / JCM 12380 / KOD1) (Pyrococcus kodakaraensis (strain KOD1)).